The chain runs to 424 residues: Serine--tRNA ligase (424 aa).

Residue T232–E234 participates in L-serine binding. Position 263 to 265 (R263 to E265) interacts with ATP. E286 serves as a coordination point for L-serine. E350 to S353 serves as a coordination point for ATP. Position 386 (S386) interacts with L-serine.

Belongs to the class-II aminoacyl-tRNA synthetase family. Type-1 seryl-tRNA synthetase subfamily. Homodimer. The tRNA molecule binds across the dimer.

The protein resides in the cytoplasm. The catalysed reaction is tRNA(Ser) + L-serine + ATP = L-seryl-tRNA(Ser) + AMP + diphosphate + H(+). It carries out the reaction tRNA(Sec) + L-serine + ATP = L-seryl-tRNA(Sec) + AMP + diphosphate + H(+). It participates in aminoacyl-tRNA biosynthesis; selenocysteinyl-tRNA(Sec) biosynthesis; L-seryl-tRNA(Sec) from L-serine and tRNA(Sec): step 1/1. In terms of biological role, catalyzes the attachment of serine to tRNA(Ser). Is also able to aminoacylate tRNA(Sec) with serine, to form the misacylated tRNA L-seryl-tRNA(Sec), which will be further converted into selenocysteinyl-tRNA(Sec). In Onion yellows phytoplasma (strain OY-M), this protein is Serine--tRNA ligase.